The primary structure comprises 453 residues: Sialic acid-binding Ig-like lectin 6 (453 aa).

A signal peptide spans 1 to 26 (MQGAQEASASEMLPLLLPLLWAGALA). The Extracellular portion of the chain corresponds to 27 to 347 (QERRFQLEGP…WKPEGRAGGV (321 aa)). In terms of domain architecture, Ig-like V-type spans 28 to 123 (ERRFQLEGPE…RDNAAYFFRL (96 aa)). Disulfide bonds link cysteine 46-cysteine 172, cysteine 51-cysteine 104, and cysteine 166-cysteine 215. N-linked (GlcNAc...) asparagine glycosylation occurs at asparagine 103. Arginine 122 serves as a coordination point for N-acetylneuraminate. Residues 148 to 231 (PNISIPGTLE…AGVTMERTIQ (84 aa)) enclose the Ig-like C2-type 1 domain. N-linked (GlcNAc...) asparagine glycans are attached at residues asparagine 149 and asparagine 163. The N-linked (GlcNAc...) asparagine glycan is linked to asparagine 233. The region spanning 238 to 333 (PQKVAISIFQ…PLGSLQISLS (96 aa)) is the Ig-like C2-type 2 domain. Cysteine 274 and cysteine 319 form a disulfide bridge. A helical membrane pass occupies residues 348 to 368 (LGAVWGASITTLVFLCVCFIF). The Cytoplasmic segment spans residues 369 to 453 (RVKTRRKKAA…TEYSEIKIHK (85 aa)). The short motif at 424-429 (LHYAVL) is the ITIM motif element. The short motif at 444–449 (TEYSEI) is the SLAM-like motif element.

It belongs to the immunoglobulin superfamily. SIGLEC (sialic acid binding Ig-like lectin) family. Interacts with LEP. Expressed at high levels in placenta (cyto- and syncytiotrophoblastic cells) and at lower levels in spleen, peripheral blood leukocytes (predominantly B-cells) and small intestine.

It is found in the cell membrane. The protein resides in the secreted. Its function is as follows. Putative adhesion molecule that mediates sialic-acid dependent binding to cells. Binds to alpha-2,6-linked sialic acid. The sialic acid recognition site may be masked by cis interactions with sialic acids on the same cell surface. The polypeptide is Sialic acid-binding Ig-like lectin 6 (SIGLEC6) (Homo sapiens (Human)).